Reading from the N-terminus, the 476-residue chain is Glycogen synthase (476 aa).

K15 provides a ligand contact to ADP-alpha-D-glucose.

The protein belongs to the glycosyltransferase 1 family. Bacterial/plant glycogen synthase subfamily.

The enzyme catalyses [(1-&gt;4)-alpha-D-glucosyl](n) + ADP-alpha-D-glucose = [(1-&gt;4)-alpha-D-glucosyl](n+1) + ADP + H(+). It participates in glycan biosynthesis; glycogen biosynthesis. Functionally, synthesizes alpha-1,4-glucan chains using ADP-glucose. This Streptococcus agalactiae serotype Ia (strain ATCC 27591 / A909 / CDC SS700) protein is Glycogen synthase.